A 206-amino-acid chain; its full sequence is KH domain-containing protein 3 (206 aa).

The tract at residues 1-40 (MDTPRRFPTLVQLMQPKAMPVEVLGHLPKRFSWFHSEFLK) is involved in RNA binding. In terms of domain architecture, KH; atypical spans 40–103 (KNPKVVRLEV…SYQEDTIKMI (64 aa)). Residues 144 to 153 (GTQRSVEVRE) are compositionally biased toward basic and acidic residues. The interval 144–206 (GTQRSVEVRE…EDTRAPVTRL (63 aa)) is disordered. Phosphothreonine is present on threonine 145. The span at 166-183 (TGTQQSLEAANQSGTQRS) shows a compositional bias: polar residues. Serine 171 carries the phosphoserine modification.

It belongs to the KHDC1 family. Component of the subcortical maternal complex (SCMC), at least composed of NLRP5, KHDC3L, OOEP, and TLE6. Within the complex, interacts with NLRP5, KHDC3L and TLE6. The SCMC may facilitate translocation of its components between the nuclear and cytoplasmic compartments. Forms a scaffold complex with OOEP/FLOPED, and interacts with BLM and TRIM25 at DNA replication forks. Interacts with PARP1; the interaction is increased following the formation of DNA double-strand breaks. Interacts with NUMA1.

It localises to the cytoplasm. The protein resides in the cell cortex. The protein localises to the nucleus. Its subcellular location is the mitochondrion. It is found in the cytoskeleton. It localises to the microtubule organizing center. The protein resides in the centrosome. The protein localises to the chromosome. Functionally, component of the subcortical maternal complex (SCMC), a multiprotein complex that plays a key role in early embryonic development. The SCMC complex is a structural constituent of cytoplasmic lattices, which consist in fibrous structures found in the cytoplasm of oocytes and preimplantation embryos. They are required to store maternal proteins critical for embryonic development, such as proteins that control epigenetic reprogramming of the preimplantation embryo, and prevent their degradation or activation. KHDC3 ensures proper spindle assembly by regulating the localization of AURKA via RHOA signaling and of PLK1 via a RHOA-independent process. Required for the localization of MAD2L1 to kinetochores to enable spindle assembly checkpoint function. As part of the OOEP-KHDC3 scaffold, recruits BLM and TRIM25 to DNA replication forks, thereby promoting the ubiquitination of BLM by TRIM25, enhancing BLM retainment at replication forks and therefore promoting stalled replication fork restart. Regulates homologous recombination-mediated DNA repair via recruitment of RAD51 to sites of DNA double-strand breaks, and sustainment of PARP1 activity, which in turn modulates downstream ATM or ATR activation. Activation of ATM or ATR in response to DNA double-strand breaks may be cell-type specific. Its role in DNA double-strand break repair is independent of its role in restarting stalled replication forks. Promotes neural stem cell neurogenesis and neuronal differentiation in the hippocampus. May regulate normal development of learning, memory and anxiety. Capable of binding RNA. This Macaca mulatta (Rhesus macaque) protein is KH domain-containing protein 3 (KHDC3L).